The primary structure comprises 153 residues: Putative OPA3-like protein CG43998 (153 aa).

A coiled-coil region spans residues 101–153; that stretch reads ELSKTYTKTKKQNQEIEDQKRVLDECVDCISADVERNQREINWIKAALKNVEK.

It belongs to the OPA3 family.

This is Putative OPA3-like protein CG43998 from Drosophila melanogaster (Fruit fly).